Reading from the N-terminus, the 499-residue chain is Probable mitochondrial-processing peptidase subunit alpha-2, chloroplastic/mitochondrial (499 aa).

Belongs to the peptidase M16 family. Heterodimer of alpha and beta subunits, forming the mitochondrial processing protease (MPP) in which subunit alpha is involved in substrate recognition and binding and subunit beta is the catalytic subunit. Component of the ubiquinol-cytochrome c oxidoreductase (cytochrome b-c1 complex, complex III, CIII), a multisubunit enzyme composed of 10 subunits. The complex is composed of 3 respiratory subunits cytochrome b (MT-CYB), cytochrome c1 (CYC1-1 or CYC1-2) and Rieske protein (UCR1-1 or UCR1-2), 2 core protein subunits MPPalpha1 (or MPPalpha2) and MPPB, and 5 low-molecular weight protein subunits QCR7-1 (or QCR7-2), UCRQ-1 (or UCRQ-2), QCR9, UCRY and probably QCR6-1 (or QCR6-2). The complex exists as an obligatory dimer and forms supercomplexes (SCs) in the inner mitochondrial membrane with NADH-ubiquinone oxidoreductase (complex I, CI), resulting in different assemblies (supercomplexes SCI(1)III(2) and SCI(2)III(4)). Interacts with TIM23-2.

It localises to the plastid. It is found in the chloroplast stroma. The protein resides in the mitochondrion matrix. The protein localises to the mitochondrion inner membrane. Substrate recognition and binding subunit of the essential mitochondrial processing protease (MPP), which cleaves the mitochondrial sequence off newly imported precursors proteins. Functionally, component of the ubiquinol-cytochrome c oxidoreductase, a multisubunit transmembrane complex that is part of the mitochondrial electron transport chain which drives oxidative phosphorylation. The respiratory chain contains 3 multisubunit complexes succinate dehydrogenase (complex II, CII), ubiquinol-cytochrome c oxidoreductase (cytochrome b-c1 complex, complex III, CIII) and cytochrome c oxidase (complex IV, CIV), that cooperate to transfer electrons derived from NADH and succinate to molecular oxygen, creating an electrochemical gradient over the inner membrane that drives transmembrane transport and the ATP synthase. The cytochrome b-c1 complex catalyzes electron transfer from ubiquinol to cytochrome c, linking this redox reaction to translocation of protons across the mitochondrial inner membrane, with protons being carried across the membrane as hydrogens on the quinol. In the process called Q cycle, 2 protons are consumed from the matrix, 4 protons are released into the intermembrane space and 2 electrons are passed to cytochrome c. The polypeptide is Probable mitochondrial-processing peptidase subunit alpha-2, chloroplastic/mitochondrial (MPPalpha2) (Arabidopsis thaliana (Mouse-ear cress)).